The following is a 535-amino-acid chain: Sodium/hydrogen exchanger 9B2 (535 aa).

Over residues 1–14 (MRNQDKRAAHKDSE) the composition is skewed to basic and acidic residues. A disordered region spans residues 1–70 (MRNQDKRAAH…TPAEPNHLQR (70 aa)). The Cytoplasmic segment spans residues 1–85 (MRNQDKRAAH…ACPPRGLLAR (85 aa)). 2 stretches are compositionally biased toward polar residues: residues 16–34 (STEV…QETG) and 46–58 (TEGS…NEKM). A helical transmembrane segment spans residues 86 to 103 (VITNVTMVILLWAVVWSV). The Extracellular portion of the chain corresponds to 104 to 112 (TGSECLPGG). The helical transmembrane segment at 113-132 (NLFGIIMLFYCAIIGGKLFG) threads the bilayer. The Cytoplasmic segment spans residues 133–143 (LIKLPTLPPLP). The helical transmembrane segment at 144-160 (PLLGMLLAGFLIRNVPV) threads the bilayer. At 161–170 (ISDNIQIKHK) the chain is on the extracellular side. The helical transmembrane segment at 171–188 (WSSALRSIALSVILVRAG) threads the bilayer. Residues 189–199 (LGLDSNALKKL) are Cytoplasmic-facing. A helical membrane pass occupies residues 200–226 (KGVCVRLSLGPCLIEACTSAVLAYFLM). The Extracellular segment spans residues 227–232 (GLPWQW). Residues 233–241 (GFMLGFVLG) form a helical membrane-spanning segment. Topologically, residues 242 to 269 (AVSPAVVVPSMLLLQEGGYGVEKGIPTL) are cytoplasmic. Residues V243, G274, D277, and D278 each coordinate Na(+). Residues 270–289 (LMAAGSFDDILAITGFNTCL) form a helical membrane-spanning segment. Over 290–299 (GMAFSTGSTV) the chain is Extracellular. Residues 300–323 (FNVLKGVLEVIIGVVTGLVLGFFI) traverse the membrane as a helical segment. Over 324 to 338 (QYFPSSDQDNLVWKR) the chain is Cytoplasmic. The chain crosses the membrane as a helical span at residues 339-356 (AFLVLGLSVLAVFSSTYF). Residues 357–360 (GFPG) are Extracellular-facing. The chain crosses the membrane as a helical span at residues 361–372 (SGGLCTLVTAFL). Topologically, residues 373-389 (AGRGWASTKTDVEKVIA) are cytoplasmic. Residues 390-410 (VAWDIFQPLLFGLIGAEVLIT) traverse the membrane as a helical segment. Residues 411 to 416 (ALRPET) lie on the Extracellular side of the membrane. The chain crosses the membrane as a helical span at residues 417–439 (IGLCVATLGIAVLIRILVTYLMV). Residues 440 to 460 (CFAGFNIKEKIFISFAWLPKA) are Cytoplasmic-facing. The chain crosses the membrane as a helical span at residues 461–472 (TVQAAIGSVALD). At 473-485 (TARSHGEKQLEGY) the chain is on the extracellular side. Residues 486-508 (GMDVLTVAFLSIIITAPVGSLLI) traverse the membrane as a helical segment. The Cytoplasmic segment spans residues 509–535 (GLLGPRLLQKAEQNKDEEDQGETSIQV).

The protein belongs to the monovalent cation:proton antiporter 1 (CPA1) transporter (TC 2.A.36) family. Homodimer; dimerization is essential for SLC9B2 activity. Lipids seem to play a role in the stabilization of the dimerization subdomain.

It is found in the cell membrane. The protein localises to the mitochondrion membrane. Its subcellular location is the endosome membrane. It localises to the recycling endosome membrane. The protein resides in the lysosome membrane. It is found in the cytoplasmic vesicle. The protein localises to the secretory vesicle. Its subcellular location is the synaptic vesicle membrane. It localises to the cell projection. The protein resides in the cilium. It is found in the flagellum membrane. The protein localises to the basolateral cell membrane. Its subcellular location is the apical cell membrane. It catalyses the reaction Li(+)(out) + H(+)(in) = Li(+)(in) + H(+)(out). The catalysed reaction is Li(+)(in) + Na(+)(out) = Li(+)(out) + Na(+)(in). The enzyme catalyses Na(+)(in) + H(+)(out) = Na(+)(out) + H(+)(in). With respect to regulation, allosterically inhibited by the N-terminal domain. Inhibited by phloretin. Electroneutral Na(+) Li(+)/H(+) antiporter that extrudes Na(+) or Li(+) in exchange for external protons across the membrane. Uses the proton gradient/membrane potential to extrude sodium. Contributes to the regulation of intracellular pH and sodium homeostasis. Also able to mediate Na(+)/Li(+) antiporter activity in kidney. May play a physiological role in renal tubular function and blood pressure homeostasis. Plays an important role for insulin secretion and clathrin-mediated endocytosis in beta-cells. Involved in sperm motility and fertility. It is controversial whether SLC9B2 plays a role in osteoclast differentiation or not. This chain is Sodium/hydrogen exchanger 9B2 (SLC9B2), found in Bison bison bison (North American plains bison).